Here is a 462-residue protein sequence, read N- to C-terminus: MEDSNTNKDINTNITNDDDDNKNINNNNNNTEEDVTVERILERKQKERESKLASMMSHYHQKYSSPSSLLSSPISSNDNNNNNNNNNNESFDINNTSYNGQDDQDEMDDFESEEYKQILLKRKAALAAKKKESLAEQMKKYNQQYDSIISGVNTILSPPPSSTTSNSSTSNNSSLNVSPVLFSTTSSSKLQSLNNNTSPSTSSSNLIDSTNVQTTSTTTAATSTSTQFTNTNINTNSNTLIENSLKISNENNNELNEQLQQQFILQQEQLREQEELKEKLQQQEIERMQTERKERELQQQKELIKNATLDNQQQQQQQPQLELQQQQSQPQQPILLPPLIFETNDIPLLTNVGFATLKNIECNAIKCSEEVVLLTKTLHQSLSTITKISIELFETFNGSTEVTCNAIGYSVNETKTMIDKCFELNNHTKSVISLHQKIKTVRDQLDKFDQIIHNAIKQMNKT.

Positions 1–108 are disordered; it reads MEDSNTNKDI…NGQDDQDEMD (108 aa). A compositionally biased stretch (basic and acidic residues) spans 36-51; sequence TVERILERKQKERESK. Residues 64 to 95 are compositionally biased toward low complexity; the sequence is SSPSSLLSSPISSNDNNNNNNNNNNESFDINN. Positions 119 to 150 form a coiled coil; it reads LLKRKAALAAKKKESLAEQMKKYNQQYDSIIS. The segment at 188–208 is disordered; the sequence is SKLQSLNNNTSPSTSSSNLID. Low complexity predominate over residues 190–208; sequence LQSLNNNTSPSTSSSNLID.

This is an uncharacterized protein from Dictyostelium discoideum (Social amoeba).